The following is a 307-amino-acid chain: Acetaldehyde dehydrogenase (307 aa).

Position 12-15 (12-15) interacts with NAD(+); it reads SGNI. The active-site Acyl-thioester intermediate is the Cys-130. Residues 161 to 169 and Asn-272 contribute to the NAD(+) site; that span reads SVGPGTRQN.

Belongs to the acetaldehyde dehydrogenase family.

It carries out the reaction acetaldehyde + NAD(+) + CoA = acetyl-CoA + NADH + H(+). This Shewanella pealeana (strain ATCC 700345 / ANG-SQ1) protein is Acetaldehyde dehydrogenase.